The sequence spans 434 residues: Trigger factor (434 aa).

Positions 160 to 245 constitute a PPIase FKBP-type domain; sequence GDKVKMNFVG…LTEVLAANLP (86 aa).

It belongs to the FKBP-type PPIase family. Tig subfamily.

The protein localises to the cytoplasm. It catalyses the reaction [protein]-peptidylproline (omega=180) = [protein]-peptidylproline (omega=0). Its function is as follows. Involved in protein export. Acts as a chaperone by maintaining the newly synthesized protein in an open conformation. Functions as a peptidyl-prolyl cis-trans isomerase. The polypeptide is Trigger factor (Shewanella sp. (strain MR-4)).